Here is a 287-residue protein sequence, read N- to C-terminus: MPENVSLIRNRTEVGQGRAWGSGAGARPAWVVMVLAGVLIFTSVVDVLGNVLVIISVLRNRKLRNAGNAFVVSLAFADLLVVCYPYPLVLHAMLHAGWLPGEMECKVSGFLMGASVIGSIFNITAIAINRYCFICQANTYEKIYGRAGTLVLLTLVWVLTAIAILPNLSLGSLTYDPRVYSCTFSQTTSAGYTIAVVTVHFLLPIAVVTFCYLRIWVLVLRVRRRVTTDVRPRLRPSELRHFLTMFVVFVLFAVCWAPLNLIGLAVAVDPPRVGPLVPDWLFVMSYF.

Residues 1 to 28 lie on the Extracellular side of the membrane; the sequence is MPENVSLIRNRTEVGQGRAWGSGAGARP. N-linked (GlcNAc...) asparagine glycosylation is found at asparagine 4 and asparagine 10. A helical membrane pass occupies residues 29–49; that stretch reads AWVVMVLAGVLIFTSVVDVLG. Residues 50-69 lie on the Cytoplasmic side of the membrane; it reads NVLVIISVLRNRKLRNAGNA. A helical membrane pass occupies residues 70–90; sequence FVVSLAFADLLVVCYPYPLVL. Residues 91-107 are Extracellular-facing; that stretch reads HAMLHAGWLPGEMECKV. Cysteine 105 and cysteine 182 are joined by a disulfide. Residues 108 to 128 form a helical membrane-spanning segment; sequence SGFLMGASVIGSIFNITAIAI. Residues 129–149 lie on the Cytoplasmic side of the membrane; the sequence is NRYCFICQANTYEKIYGRAGT. A helical transmembrane segment spans residues 150-170; the sequence is LVLLTLVWVLTAIAILPNLSL. Residues 171–192 are Extracellular-facing; that stretch reads GSLTYDPRVYSCTFSQTTSAGY. Residues 193-213 form a helical membrane-spanning segment; that stretch reads TIAVVTVHFLLPIAVVTFCYL. Over 214–245 the chain is Cytoplasmic; it reads RIWVLVLRVRRRVTTDVRPRLRPSELRHFLTM. Residues 246–266 traverse the membrane as a helical segment; the sequence is FVVFVLFAVCWAPLNLIGLAV. Residues 267–275 are Extracellular-facing; sequence AVDPPRVGP. A helical transmembrane segment spans residues 276–287; it reads LVPDWLFVMSYF.

It belongs to the G-protein coupled receptor 1 family.

Its subcellular location is the cell membrane. Functionally, high affinity receptor for melatonin. The activity of this receptor is mediated by pertussis toxin sensitive G proteins that inhibits adenylate cyclase activity. The chain is Melatonin receptor type 1B-A (mtnr1ba) from Danio rerio (Zebrafish).